We begin with the raw amino-acid sequence, 282 residues long: Bifunctional protein FolD (282 aa).

Residues 165–167 (NRS), serine 190, and isoleucine 231 each bind NADP(+).

The protein belongs to the tetrahydrofolate dehydrogenase/cyclohydrolase family. Homodimer.

The enzyme catalyses (6R)-5,10-methylene-5,6,7,8-tetrahydrofolate + NADP(+) = (6R)-5,10-methenyltetrahydrofolate + NADPH. It carries out the reaction (6R)-5,10-methenyltetrahydrofolate + H2O = (6R)-10-formyltetrahydrofolate + H(+). It participates in one-carbon metabolism; tetrahydrofolate interconversion. Catalyzes the oxidation of 5,10-methylenetetrahydrofolate to 5,10-methenyltetrahydrofolate and then the hydrolysis of 5,10-methenyltetrahydrofolate to 10-formyltetrahydrofolate. The polypeptide is Bifunctional protein FolD (Clostridium botulinum (strain Kyoto / Type A2)).